The following is a 131-amino-acid chain: MSLSDGIGDFLTRIRNAQLAMHRETRVLFSKVNSSILKILKEEGYILNYEKQESDSIPSLVVQLKYYDKSPVINDIARVSKPGCRYYSKCKDISKAYNGLGIFIISTPKGVMTDYNARRLKVGGEVLCRVF.

It belongs to the universal ribosomal protein uS8 family. Part of the 30S ribosomal subunit. Contacts proteins S5 and S12.

Functionally, one of the primary rRNA binding proteins, it binds directly to 16S rRNA central domain where it helps coordinate assembly of the platform of the 30S subunit. This chain is Small ribosomal subunit protein uS8, found in Wolbachia pipientis subsp. Culex pipiens (strain wPip).